The sequence spans 331 residues: High-affinity nickel-transport protein NixA (331 aa).

7 helical membrane-spanning segments follow: residues L3–F23, M77–A97, V110–I130, P184–L204, V213–L233, I259–I279, and D302–W322.

Belongs to the NiCoT transporter (TC 2.A.52) family.

Its subcellular location is the cell inner membrane. High-affinity nickel intake protein. Imports nickel ions in an energy-dependent fashion. Necessary for the expression of catalytically active urease. The sequence is that of High-affinity nickel-transport protein NixA (nixA) from Helicobacter pylori (strain J99 / ATCC 700824) (Campylobacter pylori J99).